Here is a 97-residue protein sequence, read N- to C-terminus: Small cell adhesion glycoprotein (97 aa).

Residues 1–36 (MNNLPATPSPEELMTTPVFQAPETMSPQAEEASTAL) are Extracellular-facing. An O-linked (GalNAc...) threonine glycan is attached at Thr7. O-linked (GalNAc...) serine glycosylation is present at Ser9. 3 O-linked (GalNAc...) threonine glycosylation sites follow: Thr15, Thr16, and Thr24. An O-linked (GalNAc...) serine glycan is attached at Ser26. The helical; Signal-anchor for type III membrane protein transmembrane segment at 37-57 (IAVVITVVFLTLLSVVTLIFF) threads the bilayer. Over 58 to 97 (YLYKNKGSYVTYEPAEGEPSAILQMETDSAKGKEKEEYFI) the chain is Cytoplasmic.

The protein belongs to the SMAGP family. Post-translationally, O-glycosylated. The O-glycan is modified with sialic acid residues. Detected in brain (at protein level). Highly expressed in kidney and placenta. Detected in skin, breast, heart, lung, liver, prostate, spleen, small intestine, colon and stomach.

Its subcellular location is the cell membrane. The protein resides in the cytoplasmic vesicle membrane. In terms of biological role, may play a role in epithelial cell-cell contacts. May play a role in tumor invasiveness and metastasis formation. This is Small cell adhesion glycoprotein (Smagp) from Rattus norvegicus (Rat).